Reading from the N-terminus, the 193-residue chain is dTTP/UTP pyrophosphatase (193 aa).

Asp-70 (proton acceptor) is an active-site residue.

Belongs to the Maf family. YhdE subfamily. The cofactor is a divalent metal cation.

Its subcellular location is the cytoplasm. It carries out the reaction dTTP + H2O = dTMP + diphosphate + H(+). The enzyme catalyses UTP + H2O = UMP + diphosphate + H(+). Functionally, nucleoside triphosphate pyrophosphatase that hydrolyzes dTTP and UTP. May have a dual role in cell division arrest and in preventing the incorporation of modified nucleotides into cellular nucleic acids. This Alcanivorax borkumensis (strain ATCC 700651 / DSM 11573 / NCIMB 13689 / SK2) protein is dTTP/UTP pyrophosphatase.